Consider the following 478-residue polypeptide: Divinyl ether synthase CYP74D1 (478 aa).

Position 431 (cysteine 431) interacts with heme.

Belongs to the cytochrome P450 family. 9-divinyl ether synthase subfamily. As to expression, expressed in roots. Detected in stems, but not in flower buds, petioles, cotyledons or leaves.

It carries out the reaction (9S)-hydroperoxy-(10E,12Z)-octadecadienoate = colneleate + H2O. The enzyme catalyses (9S)-hydroperoxy-(10E,12Z,15Z)-octadecatrienoate = colnelenate + H2O. Its function is as follows. Involved in the biosynthesis of the anti-fungal toxins colneleate and colnelenate. Can use (9S)-hydroperoxy-(10E,12Z)-octadecadienoate (9-HPOD) and (9S)-hydroperoxy-(10E,12Z,15Z)-octadecatrienoate (9-HPOT) as substrates, but has a very low activity with the corresponding 13-hydroperoxides (13-HPOD and 13-POT). The chain is Divinyl ether synthase CYP74D1 from Solanum lycopersicum (Tomato).